The primary structure comprises 500 residues: Probable malate:quinone oxidoreductase (500 aa).

This sequence belongs to the MQO family. It depends on FAD as a cofactor.

It carries out the reaction (S)-malate + a quinone = a quinol + oxaloacetate. The protein operates within carbohydrate metabolism; tricarboxylic acid cycle; oxaloacetate from (S)-malate (quinone route): step 1/1. The protein is Probable malate:quinone oxidoreductase of Bacillus mycoides (strain KBAB4) (Bacillus weihenstephanensis).